We begin with the raw amino-acid sequence, 70 residues long: Large ribosomal subunit protein bL28 (70 aa).

Belongs to the bacterial ribosomal protein bL28 family.

The polypeptide is Large ribosomal subunit protein bL28 (Maridesulfovibrio salexigens (strain ATCC 14822 / DSM 2638 / NCIMB 8403 / VKM B-1763) (Desulfovibrio salexigens)).